Consider the following 332-residue polypeptide: SLAM family member 6 (332 aa).

A signal peptide spans 1 to 21; it reads MLWLFQSLLFVFCFGPGNVVS. The Extracellular segment spans residues 22–226; sequence QSSLTPLMVN…VKIQYTDTKM (205 aa). In terms of domain architecture, Ig-like V-type spans 35–120; sequence GESVTLPLEF…ISTKTSAKLS (86 aa). Residues asparagine 58, asparagine 87, asparagine 137, asparagine 144, asparagine 161, asparagine 178, and asparagine 203 are each glycosylated (N-linked (GlcNAc...) asparagine). An Ig-like C2-type domain is found at 132-209; the sequence is NIQVTNHSQL…AVSNLSFSVS (78 aa). 2 disulfide bridges follow: cysteine 147–cysteine 214 and cysteine 153–cysteine 195. Residues 227-247 form a helical membrane-spanning segment; sequence ILFMVSGICIVFGFIILLLLV. At 248–331 the chain is on the cytoplasmic side; it reads LRKRRDSLSL…FSRATALDNV (84 aa). Tyrosine 274 carries the post-translational modification Phosphotyrosine. Serine 278 is subject to Phosphoserine. 2 short sequence motifs (ITSM) span residues 283 to 288 and 307 to 312; these read TVYASV and TIYSTI. The residue at position 309 (tyrosine 309) is a Phosphotyrosine.

As to quaternary structure, homodimer. Interacts with PTN6. Interacts (phosphorylated) with PTN11. Interacts (phosphorylated on tyrosine residues) with SH2D1A/SAP and SH2D1B/EAT2; SH2D1A and SH2D1B can associate with the same SLAMF6 molecule; interaction with SH2D1B is mediated by ITSM 2. In terms of processing, phosphorylation in NK cells upon engagment by SLAMF6-expressing target cells is leading to receptor activation. Expressed by all (resting and activated) natural killer cells (NK), T- and B-lymphocytes. Increased surface expression on T-cells of systemic lupus erythematosus (SLE) patients.

The protein resides in the cell membrane. Self-ligand receptor of the signaling lymphocytic activation molecule (SLAM) family. SLAM receptors triggered by homo- or heterotypic cell-cell interactions are modulating the activation and differentiation of a wide variety of immune cells and thus are involved in the regulation and interconnection of both innate and adaptive immune response. Activities are controlled by presence or absence of small cytoplasmic adapter proteins, SH2D1A/SAP and/or SH2D1B/EAT-2. Triggers cytolytic activity only in natural killer cells (NK) expressing high surface densities of natural cytotoxicity receptors. Positive signaling in NK cells implicates phosphorylation of VAV1. NK cell activation seems to depend on SH2D1B and not on SH2D1A. In conjunction with SLAMF1 controls the transition between positive selection and the subsequent expansion and differentiation of the thymocytic natural killer T (NKT) cell lineage. Promotes T-cell differentiation into a helper T-cell Th17 phenotype leading to increased IL-17 secretion; the costimulatory activity requires SH2D1A. Promotes recruitment of RORC to the IL-17 promoter. In conjunction with SLAMF1 and CD84/SLAMF5 may be a negative regulator of the humoral immune response. In the absence of SH2D1A/SAP can transmit negative signals to CD4(+) T-cells and NKT cells. Negatively regulates germinal center formation by inhibiting T-cell:B-cell adhesion; the function probably implicates increased association with PTPN6/SHP-1 via ITSMs in absence of SH2D1A/SAP. However, reported to be involved in maintaining B-cell tolerance in germinal centers and in preventing autoimmunity. The polypeptide is SLAM family member 6 (SLAMF6) (Homo sapiens (Human)).